Reading from the N-terminus, the 468-residue chain is Argininosuccinate lyase (468 aa).

Ser-33, Asn-121, and Thr-166 together coordinate 2-(N(omega)-L-arginino)succinate. His-167 acts as the Proton acceptor in catalysis. Catalysis depends on Ser-288, which acts as the Proton donor. Positions 296, 328, 333, and 336 each coordinate 2-(N(omega)-L-arginino)succinate.

Belongs to the lyase 1 family. Argininosuccinate lyase subfamily. Homotetramer.

The catalysed reaction is 2-(N(omega)-L-arginino)succinate = fumarate + L-arginine. It participates in amino-acid biosynthesis; L-arginine biosynthesis; L-arginine from L-ornithine and carbamoyl phosphate: step 3/3. The sequence is that of Argininosuccinate lyase (ARG4) from Candida albicans (Yeast).